Reading from the N-terminus, the 143-residue chain is Large ribosomal subunit protein uL11 (143 aa).

Belongs to the universal ribosomal protein uL11 family. In terms of assembly, part of the ribosomal stalk of the 50S ribosomal subunit. Interacts with L10 and the large rRNA to form the base of the stalk. L10 forms an elongated spine to which L12 dimers bind in a sequential fashion forming a multimeric L10(L12)X complex. In terms of processing, one or more lysine residues are methylated.

Functionally, forms part of the ribosomal stalk which helps the ribosome interact with GTP-bound translation factors. The polypeptide is Large ribosomal subunit protein uL11 (Allorhizobium ampelinum (strain ATCC BAA-846 / DSM 112012 / S4) (Agrobacterium vitis (strain S4))).